The primary structure comprises 275 residues: uncharacterized protein (275 aa).

NAD(+) contacts are provided by residues 20-22 (RGQ), 41-42 (DI), 80-81 (DV), and asparagine 107. Serine 160 lines the substrate pocket. The active-site Proton acceptor is the tyrosine 173. Residues lysine 177 and 206-208 (VET) each bind NAD(+).

It belongs to the short-chain dehydrogenases/reductases (SDR) family.

This is an uncharacterized protein from Mycolicibacterium paratuberculosis (strain ATCC BAA-968 / K-10) (Mycobacterium paratuberculosis).